The primary structure comprises 673 residues: DNA ligase (673 aa).

NAD(+) contacts are provided by residues 34–38, 83–84, and E116; these read DAEYD and SL. The N6-AMP-lysine intermediate role is filled by K118. The NAD(+) site is built by R139, E176, K293, and K317. C411, C414, C429, and C435 together coordinate Zn(2+). The region spanning 595–673 is the BRCT domain; the sequence is NQQNPFFGKT…EDEFLKWVNS (79 aa).

Belongs to the NAD-dependent DNA ligase family. LigA subfamily. Requires Mg(2+) as cofactor. Mn(2+) is required as a cofactor.

It catalyses the reaction NAD(+) + (deoxyribonucleotide)n-3'-hydroxyl + 5'-phospho-(deoxyribonucleotide)m = (deoxyribonucleotide)n+m + AMP + beta-nicotinamide D-nucleotide.. In terms of biological role, DNA ligase that catalyzes the formation of phosphodiester linkages between 5'-phosphoryl and 3'-hydroxyl groups in double-stranded DNA using NAD as a coenzyme and as the energy source for the reaction. It is essential for DNA replication and repair of damaged DNA. In Legionella pneumophila (strain Lens), this protein is DNA ligase.